Consider the following 453-residue polypeptide: MMQTVLAKIVADKAIWVEARKQQQPLASFQNEVQPSTRHFYDALQGARTAFILECKKASPSKGVICDDFDPARIAAIYKHYASAISVLTDEKYFQGSFDFLPIVSQIAPQPILCKDFIIDPYQIYLARYYQADACLLMLSVLDDEQYRQLAAVAHSLKMGVLTEVSNEEELERAIALGAKVVGINNRDLRDLSIDLNRTRELAPKLGHNVTVISESGINTYAQVRELSHFADGFLIGSALMAHDDLHAAVRRVLLGENKVCGLTRGQDAKAAYDAGAIYGGLIFVATSPRCVNVEQAQEVMAAAPLQYVGVFRNHDIADVLDKAKVLSLVAVQLHGNEDQLYIDTLREALPAHVAIWKALSVGETLPARELQHVDKYVLDNGQGGSGQRFDWSLLNGQSLGNVLLAGGLGADNCVEAAQTGCAGLDFNSAVESQPGIKDARLLASVFQTLRAY.

The tract at residues 1–257 (MMQTVLAKIV…AAVRRVLLGE (257 aa)) is indole-3-glycerol phosphate synthase. Residues 258–453 (NKVCGLTRGQ…ASVFQTLRAY (196 aa)) form an N-(5'-phosphoribosyl)anthranilate isomerase region.

In the N-terminal section; belongs to the TrpC family. The protein in the C-terminal section; belongs to the TrpF family. Monomer.

It carries out the reaction N-(5-phospho-beta-D-ribosyl)anthranilate = 1-(2-carboxyphenylamino)-1-deoxy-D-ribulose 5-phosphate. The enzyme catalyses 1-(2-carboxyphenylamino)-1-deoxy-D-ribulose 5-phosphate + H(+) = (1S,2R)-1-C-(indol-3-yl)glycerol 3-phosphate + CO2 + H2O. It participates in amino-acid biosynthesis; L-tryptophan biosynthesis; L-tryptophan from chorismate: step 3/5. Its pathway is amino-acid biosynthesis; L-tryptophan biosynthesis; L-tryptophan from chorismate: step 4/5. Functionally, bifunctional enzyme that catalyzes two sequential steps of tryptophan biosynthetic pathway. The first reaction is catalyzed by the isomerase, coded by the TrpF domain; the second reaction is catalyzed by the synthase, coded by the TrpC domain. This is Tryptophan biosynthesis protein TrpCF (trpC) from Escherichia coli O157:H7.